Here is a 340-residue protein sequence, read N- to C-terminus: Uroporphyrinogen decarboxylase (340 aa).

Substrate-binding positions include Arg-21–Arg-25, Phe-40, Asp-71, Tyr-148, Ser-203, and His-316.

This sequence belongs to the uroporphyrinogen decarboxylase family. As to quaternary structure, homodimer.

It localises to the cytoplasm. The enzyme catalyses uroporphyrinogen III + 4 H(+) = coproporphyrinogen III + 4 CO2. It participates in porphyrin-containing compound metabolism; protoporphyrin-IX biosynthesis; coproporphyrinogen-III from 5-aminolevulinate: step 4/4. Catalyzes the decarboxylation of four acetate groups of uroporphyrinogen-III to yield coproporphyrinogen-III. The sequence is that of Uroporphyrinogen decarboxylase from Campylobacter jejuni subsp. jejuni serotype O:2 (strain ATCC 700819 / NCTC 11168).